A 305-amino-acid polypeptide reads, in one-letter code: Oxygen-dependent coproporphyrinogen-III oxidase (305 aa).

Residue S93 participates in substrate binding. Residues H97 and H107 each contribute to the a divalent metal cation site. Catalysis depends on H107, which acts as the Proton donor. N109–R111 provides a ligand contact to substrate. A divalent metal cation is bound by residues H146 and H176. The segment at Y241 to G276 is important for dimerization. Residue G259–R261 participates in substrate binding.

It belongs to the aerobic coproporphyrinogen-III oxidase family. As to quaternary structure, homodimer. A divalent metal cation serves as cofactor.

It is found in the cytoplasm. The enzyme catalyses coproporphyrinogen III + O2 + 2 H(+) = protoporphyrinogen IX + 2 CO2 + 2 H2O. The protein operates within porphyrin-containing compound metabolism; protoporphyrin-IX biosynthesis; protoporphyrinogen-IX from coproporphyrinogen-III (O2 route): step 1/1. Functionally, involved in the heme biosynthesis. Catalyzes the aerobic oxidative decarboxylation of propionate groups of rings A and B of coproporphyrinogen-III to yield the vinyl groups in protoporphyrinogen-IX. The polypeptide is Oxygen-dependent coproporphyrinogen-III oxidase (Pseudomonas aeruginosa (strain LESB58)).